The primary structure comprises 105 residues: Guanidinium exporter (105 aa).

Residues 1–21 (MSWIILLIAGLLEVVWAVGLK) traverse the membrane as a helical segment. The Cytoplasmic portion of the chain corresponds to 22–28 (YTHGFSR). Residues 29–49 (LTPSIITITAMVISMALLSWA) traverse the membrane as a helical segment. The Periplasmic portion of the chain corresponds to 50 to 57 (MKTLPVGT). Residues 58–78 (AYAIWTGIGAVGAAITGILLL) form a helical membrane-spanning segment. Topologically, residues 79–81 (GES) are cytoplasmic. A helical membrane pass occupies residues 82-102 (ASPARLLSLGLIVAGIIGLKL). Residues 103-105 (SAH) are Periplasmic-facing.

Belongs to the drug/metabolite transporter (DMT) superfamily. Small multidrug resistance (SMR) (TC 2.A.7.1) family. Gdx/SugE subfamily.

The protein localises to the cell inner membrane. In terms of biological role, guanidinium ion exporter. Couples guanidinium export to the proton motive force, exchanging one guanidinium ion for two protons. This chain is Guanidinium exporter, found in Salmonella typhi.